Here is a 91-residue protein sequence, read N- to C-terminus: Putative defensin-like protein 221 (91 aa).

The N-terminal stretch at 1-19 is a signal peptide; that stretch reads MKTLFFFLTIAVLVSSCTS. Intrachain disulfides connect Cys61-Cys78, Cys64-Cys83, and Cys68-Cys85.

Belongs to the DEFL family.

It is found in the secreted. This chain is Putative defensin-like protein 221, found in Arabidopsis thaliana (Mouse-ear cress).